A 361-amino-acid chain; its full sequence is DNA replication and repair protein RecF (361 aa).

Gly30 to Thr37 provides a ligand contact to ATP.

Belongs to the RecF family.

It localises to the cytoplasm. In terms of biological role, the RecF protein is involved in DNA metabolism; it is required for DNA replication and normal SOS inducibility. RecF binds preferentially to single-stranded, linear DNA. It also seems to bind ATP. This chain is DNA replication and repair protein RecF, found in Clostridium botulinum (strain Eklund 17B / Type B).